Here is a 139-residue protein sequence, read N- to C-terminus: Large ribosomal subunit protein uL16 (139 aa).

Basic residues predominate over residues 1–17 (MLQPKRTKYRKQQKGRM). The segment at 1–25 (MLQPKRTKYRKQQKGRMKGLSQRGH) is disordered.

This sequence belongs to the universal ribosomal protein uL16 family. In terms of assembly, part of the 50S ribosomal subunit.

Binds 23S rRNA and is also seen to make contacts with the A and possibly P site tRNAs. The polypeptide is Large ribosomal subunit protein uL16 (Christiangramia forsetii (strain DSM 17595 / CGMCC 1.15422 / KT0803) (Gramella forsetii)).